We begin with the raw amino-acid sequence, 160 residues long: SsrA-binding protein (160 aa).

The disordered stretch occupies residues 134–160 (YDKRDTERERDSNRELHRAVRNKGKED).

It belongs to the SmpB family.

It is found in the cytoplasm. In terms of biological role, required for rescue of stalled ribosomes mediated by trans-translation. Binds to transfer-messenger RNA (tmRNA), required for stable association of tmRNA with ribosomes. tmRNA and SmpB together mimic tRNA shape, replacing the anticodon stem-loop with SmpB. tmRNA is encoded by the ssrA gene; the 2 termini fold to resemble tRNA(Ala) and it encodes a 'tag peptide', a short internal open reading frame. During trans-translation Ala-aminoacylated tmRNA acts like a tRNA, entering the A-site of stalled ribosomes, displacing the stalled mRNA. The ribosome then switches to translate the ORF on the tmRNA; the nascent peptide is terminated with the 'tag peptide' encoded by the tmRNA and targeted for degradation. The ribosome is freed to recommence translation, which seems to be the essential function of trans-translation. This is SsrA-binding protein from Pseudomonas fluorescens (strain SBW25).